We begin with the raw amino-acid sequence, 500 residues long: Glycerol kinase (500 aa).

T12 lines the ADP pocket. ATP is bound by residues T12, T13, and S14. Position 12 (T12) interacts with sn-glycerol 3-phosphate. R16 lines the ADP pocket. Sn-glycerol 3-phosphate-binding residues include R82, E83, Y134, and D244. Glycerol-binding residues include R82, E83, Y134, D244, and Q245. Positions 266 and 309 each coordinate ADP. ATP contacts are provided by T266, G309, Q313, and G410. ADP is bound by residues G410 and N414.

It belongs to the FGGY kinase family. As to quaternary structure, homotetramer and homodimer (in equilibrium).

The catalysed reaction is glycerol + ATP = sn-glycerol 3-phosphate + ADP + H(+). The protein operates within polyol metabolism; glycerol degradation via glycerol kinase pathway; sn-glycerol 3-phosphate from glycerol: step 1/1. Activated by phosphorylation and inhibited by fructose 1,6-bisphosphate (FBP). Its function is as follows. Key enzyme in the regulation of glycerol uptake and metabolism. Catalyzes the phosphorylation of glycerol to yield sn-glycerol 3-phosphate. This is Glycerol kinase from Alkaliphilus metalliredigens (strain QYMF).